The following is an 875-amino-acid chain: Neurotrypsin (875 aa).

The N-terminal stretch at 1–20 (MTLARFVLALVLGALPEVVX) is a signal peptide. N-linked (GlcNAc...) asparagine glycosylation occurs at Asn-26. Positions 31–88 (HRPRHSPPTGPHYPYYLPTQQRPPRTRPPPPLPRFPRPPRALPAQRPHALQAGHTPRP) are disordered. Pro residues predominate over residues 56–71 (TRPPPPLPRFPRPPRA). Residues 93–165 (CPAGEPWVSV…GKVDWGYCDC (73 aa)) form the Kringle domain. 20 cysteine pairs are disulfide-bonded: Cys-93–Cys-165, Cys-109–Cys-149, Cys-138–Cys-163, Cys-195–Cys-259, Cys-208–Cys-269, Cys-239–Cys-249, Cys-305–Cys-369, Cys-318–Cys-379, Cys-349–Cys-359, Cys-412–Cys-475, Cys-425–Cys-485, Cys-455–Cys-465, Cys-525–Cys-589, Cys-538–Cys-599, Cys-569–Cys-579, Cys-619–Cys-750, Cys-661–Cys-677, Cys-765–Cys-831, Cys-794–Cys-808, and Cys-821–Cys-850. 4 consecutive SRCR domains span residues 170–271 (IRLR…TCSF), 280–381 (IRLV…SCTP), 387–487 (IRLA…ACYP), and 500–601 (VRLM…ICDY). The segment at 619 to 630 (CGLRLLHRRQKR) is zymogen activation region. The Peptidase S1 domain maps to 631–874 (IIGGKNSLRG…FVPWIKSVTK (244 aa)). The active-site Charge relay system is the His-676. The N-linked (GlcNAc...) asparagine glycan is linked to Asn-683. Asp-726 acts as the Charge relay system in catalysis. Catalysis depends on Ser-825, which acts as the Charge relay system.

Belongs to the peptidase S1 family.

It is found in the secreted. Its function is as follows. Plays a role in neuronal plasticity and the proteolytic action may subserve structural reorganizations associated with learning and memory operations. The chain is Neurotrypsin (PRSS12) from Nomascus leucogenys (Northern white-cheeked gibbon).